The following is a 407-amino-acid chain: Betaine--homocysteine S-methyltransferase 1 (407 aa).

Residues 11–314 form the Hcy-binding domain; the sequence is RGILERLNAG…YHIRAIAEEL (304 aa). 3 positions are modified to N6-succinyllysine: Lys-40, Lys-93, and Lys-98. Cys-217 contacts Zn(2+). Lys-232 and Lys-241 each carry N6-succinyllysine. The Zn(2+) site is built by Cys-299 and Cys-300. Ser-330 is subject to Phosphoserine. N6-succinyllysine occurs at positions 340 and 377.

Homotetramer. Zn(2+) is required as a cofactor. In terms of tissue distribution, highly expressed in liver and kidney (at protein level). Expressed at lower levels in testis, lung, cerebellum, skeletal muscle and pancreas (at protein level).

The protein resides in the cytoplasm. The protein localises to the cytosol. It localises to the nucleus. It carries out the reaction L-homocysteine + glycine betaine = N,N-dimethylglycine + L-methionine. The protein operates within amine and polyamine degradation; betaine degradation; sarcosine from betaine: step 1/2. Its pathway is amino-acid biosynthesis; L-methionine biosynthesis via de novo pathway; L-methionine from L-homocysteine (BhmT route): step 1/1. In terms of biological role, involved in the regulation of homocysteine metabolism. Converts betaine and homocysteine to dimethylglycine and methionine, respectively. This reaction is also required for the irreversible oxidation of choline. This Rattus norvegicus (Rat) protein is Betaine--homocysteine S-methyltransferase 1.